The chain runs to 207 residues: Peptidyl-prolyl cis-trans isomerase FKBP16-1, chloroplastic (207 aa).

The PPIase FKBP-type domain occupies 104-207 (GDLVELNYVC…VFEIQLLKVL (104 aa)).

The protein belongs to the FKBP-type PPIase family.

The protein resides in the plastid. It localises to the chloroplast thylakoid lumen. It catalyses the reaction [protein]-peptidylproline (omega=180) = [protein]-peptidylproline (omega=0). In terms of biological role, PPIases accelerate the folding of proteins. It catalyzes the cis-trans isomerization of proline imidic peptide bonds in oligopeptides. The chain is Peptidyl-prolyl cis-trans isomerase FKBP16-1, chloroplastic (FKBP16-1) from Arabidopsis thaliana (Mouse-ear cress).